The following is a 159-amino-acid chain: Ribosomal RNA large subunit methyltransferase H (159 aa).

Residues leucine 76, glycine 108, and 127 to 132 (FSKMTF) contribute to the S-adenosyl-L-methionine site.

The protein belongs to the RNA methyltransferase RlmH family. As to quaternary structure, homodimer.

It is found in the cytoplasm. The enzyme catalyses pseudouridine(1915) in 23S rRNA + S-adenosyl-L-methionine = N(3)-methylpseudouridine(1915) in 23S rRNA + S-adenosyl-L-homocysteine + H(+). Its function is as follows. Specifically methylates the pseudouridine at position 1915 (m3Psi1915) in 23S rRNA. In Shouchella clausii (strain KSM-K16) (Alkalihalobacillus clausii), this protein is Ribosomal RNA large subunit methyltransferase H.